Here is a 184-residue protein sequence, read N- to C-terminus: Trypsin/chymotrypsin inhibitor (184 aa).

Intrachain disulfides connect C39-C84 and C136-C147.

It belongs to the protease inhibitor I3 (leguminous Kunitz-type inhibitor) family. Homodimer.

In terms of biological role, inhibits trypsin and alpha-chymotrypsin. The sequence is that of Trypsin/chymotrypsin inhibitor from Alocasia macrorrhizos (Giant taro).